We begin with the raw amino-acid sequence, 692 residues long: Potassium-transporting ATPase ATP-binding subunit (692 aa).

Helical transmembrane passes span 35 to 55, 64 to 84, 213 to 233, and 254 to 274; these read VMFI…KDLY, LQIS…EAIA, IALT…VMSL, and ILIS…LSAI. Residue aspartate 307 is the 4-aspartylphosphate intermediate of the active site. ATP-binding positions include aspartate 344, glutamate 348, 377 to 384, and lysine 400; that span reads FSASTKMS. Mg(2+)-binding residues include aspartate 523 and aspartate 527. Transmembrane regions (helical) follow at residues 592 to 612, 626 to 646, and 672 to 692; these read YFAI…VGPL, AVLS…PLAL, and MVIP…LGII.

The protein belongs to the cation transport ATPase (P-type) (TC 3.A.3) family. Type IA subfamily. As to quaternary structure, the system is composed of three essential subunits: KdpA, KdpB and KdpC.

The protein localises to the cell inner membrane. The enzyme catalyses K(+)(out) + ATP + H2O = K(+)(in) + ADP + phosphate + H(+). In terms of biological role, part of the high-affinity ATP-driven potassium transport (or Kdp) system, which catalyzes the hydrolysis of ATP coupled with the electrogenic transport of potassium into the cytoplasm. This subunit is responsible for energy coupling to the transport system and for the release of the potassium ions to the cytoplasm. This chain is Potassium-transporting ATPase ATP-binding subunit, found in Leptospira interrogans serogroup Icterohaemorrhagiae serovar Lai (strain 56601).